The chain runs to 375 residues: Odorant receptor 10 (375 aa).

Helical transmembrane passes span 32–52 (ISIIPVTVMTFFMFLDLGHSW), 58–78 (VIIKGYFAVLYFNAVLRTLIL), 125–145 (NLALGAIISTCFTVYPMFTGV), 167–187 (IIYLVQVVLTFPGCCMYIPFT), 250–270 (YICFVEFLSFGLMLCALLFLL), and 279–299 (IVIVAAYIFMIISQIFAFYWH).

It belongs to the insect chemoreceptor superfamily. Heteromeric odorant receptor channel (TC 1.A.69) family. As to expression, expressed in female antenna, maxillary palp and proboscis. Expressed in female body. Expressed in male tissues.

Its subcellular location is the cell membrane. Functionally, odorant receptor which complexes with Orco, a coreceptor, to form odorant-sensing units, providing sensitive and prolonged odorant signaling and calcium permeability. Can sense indole, 1-octen-3-ol, 3-methyindole and an insect repellent DEET. This Aedes albopictus (Asian tiger mosquito) protein is Odorant receptor 10.